A 256-amino-acid polypeptide reads, in one-letter code: UPF0246 protein Maqu_2499 (256 aa).

It belongs to the UPF0246 family.

This chain is UPF0246 protein Maqu_2499, found in Marinobacter nauticus (strain ATCC 700491 / DSM 11845 / VT8) (Marinobacter aquaeolei).